Reading from the N-terminus, the 546-residue chain is Chaperonin GroEL (546 aa).

ATP-binding positions include 29-32 (TLGP), 86-90 (DGTTT), Gly-413, 476-478 (NAA), and Asp-492. Positions 521–546 (RPDESGNDAGAGAQGMDPSMMGGGMM) are disordered.

Belongs to the chaperonin (HSP60) family. Forms a cylinder of 14 subunits composed of two heptameric rings stacked back-to-back. Interacts with the co-chaperonin GroES.

It is found in the cytoplasm. The enzyme catalyses ATP + H2O + a folded polypeptide = ADP + phosphate + an unfolded polypeptide.. Together with its co-chaperonin GroES, plays an essential role in assisting protein folding. The GroEL-GroES system forms a nano-cage that allows encapsulation of the non-native substrate proteins and provides a physical environment optimized to promote and accelerate protein folding. The sequence is that of Chaperonin GroEL from Tetragenococcus halophilus (Pediococcus halophilus).